The chain runs to 959 residues: DNA-directed RNA polymerase subunit beta'' (959 aa).

Zn(2+) is bound by residues Cys-211, Cys-288, Cys-295, and Cys-298.

The protein belongs to the RNA polymerase beta' chain family. RpoC2 subfamily. In plastids the minimal PEP RNA polymerase catalytic core is composed of four subunits: alpha, beta, beta', and beta''. When a (nuclear-encoded) sigma factor is associated with the core the holoenzyme is formed, which can initiate transcription. The cofactor is Zn(2+).

It localises to the plastid. The protein resides in the apicoplast. It catalyses the reaction RNA(n) + a ribonucleoside 5'-triphosphate = RNA(n+1) + diphosphate. In terms of biological role, DNA-dependent RNA polymerase catalyzes the transcription of DNA into RNA using the four ribonucleoside triphosphates as substrates. This Plasmodium falciparum (isolate 3D7) protein is DNA-directed RNA polymerase subunit beta''.